The chain runs to 312 residues: Ribosomal protein L11 methyltransferase (312 aa).

Residues T162, G183, D205, and N248 each contribute to the S-adenosyl-L-methionine site.

It belongs to the methyltransferase superfamily. PrmA family.

The protein resides in the cytoplasm. The catalysed reaction is L-lysyl-[protein] + 3 S-adenosyl-L-methionine = N(6),N(6),N(6)-trimethyl-L-lysyl-[protein] + 3 S-adenosyl-L-homocysteine + 3 H(+). Functionally, methylates ribosomal protein L11. In Bacillus cereus (strain Q1), this protein is Ribosomal protein L11 methyltransferase.